We begin with the raw amino-acid sequence, 38 residues long: Potassium channel toxin alpha-KTx 3.8 (38 aa).

Intrachain disulfides connect Cys8/Cys28, Cys14/Cys33, and Cys18/Cys35. Residues 26–33 (GKCMNGKC) form an interaction with Ca(2+)-activated K(+) channels region.

Expressed by the venom gland.

It is found in the secreted. Functionally, potassium channel inhibitor. This Hottentotta tamulus sindicus (Scorpion) protein is Potassium channel toxin alpha-KTx 3.8.